The primary structure comprises 155 residues: 1,4-dihydroxy-2-naphthoyl-CoA hydrolase (155 aa).

Residue D27 is part of the active site.

It belongs to the 4-hydroxybenzoyl-CoA thioesterase family. DHNA-CoA hydrolase subfamily.

The catalysed reaction is 1,4-dihydroxy-2-naphthoyl-CoA + H2O = 1,4-dihydroxy-2-naphthoate + CoA + H(+). It functions in the pathway cofactor biosynthesis; phylloquinone biosynthesis. Its pathway is quinol/quinone metabolism; 1,4-dihydroxy-2-naphthoate biosynthesis; 1,4-dihydroxy-2-naphthoate from chorismate: step 7/7. In terms of biological role, catalyzes the hydrolysis of 1,4-dihydroxy-2-naphthoyl-CoA (DHNA-CoA) to 1,4-dihydroxy-2-naphthoate (DHNA), a reaction involved in phylloquinone (vitamin K1) biosynthesis. The protein is 1,4-dihydroxy-2-naphthoyl-CoA hydrolase of Prochlorococcus marinus (strain NATL2A).